The chain runs to 534 residues: Thromboxane-A synthase (534 aa).

The Cytoplasmic portion of the chain corresponds to 1 to 10; the sequence is MEVLGFLSPE. A helical membrane pass occupies residues 11–31; it reads LNGPMVTMALAVVLLALLKWY. Topologically, residues 32 to 75 are lumenal; that stretch reads STSAFSRLEKLGIRHPKPSPFIGNLTFFRQGFWESHMELRKQYG. Residues 76-96 form a helical membrane-spanning segment; that stretch reads PLSGYYLGRRMIVVISDPDMI. Residues 97 to 223 are Cytoplasmic-facing; that stretch reads KQVLAEKFSN…RRFFAFSVPR (127 aa). Residues 224-244 traverse the membrane as a helical segment; that stretch reads LILVLILSFPSIMVPLARILP. The Lumenal segment spans residues 245-336; the sequence is NKKRDEVNGF…LTVDEVVGQA (92 aa). The helical transmembrane segment at 337–357 threads the bilayer; sequence FLFLIAGYEIITNTLSFVTYL. Residues 358–534 lie on the Cytoplasmic side of the membrane; that stretch reads LATNPDCQEK…NGVYIRIVPR (177 aa). Cys480 contributes to the heme binding site.

Belongs to the cytochrome P450 family. Monomer. The cofactor is heme. As to expression, expressed in lung, kidney and thymus.

The protein resides in the endoplasmic reticulum membrane. The catalysed reaction is prostaglandin H2 = thromboxane A2. It carries out the reaction prostaglandin H2 = (12S)-hydroxy-(5Z,8E,10E)-heptadecatrienoate + malonaldehyde. The enzyme catalyses a hydroperoxyeicosatetraenoate = an oxoeicosatetraenoate + H2O. It catalyses the reaction (15S)-hydroperoxy-(5Z,8Z,11Z,13E)-eicosatetraenoate = 15-oxo-(5Z,8Z,11Z,13E)-eicosatetraenoate + H2O. The catalysed reaction is (15S)-hydroperoxy-(5Z,8Z,11Z,13E)-eicosatetraenoate + AH2 = (15S)-hydroxy-(5Z,8Z,11Z,13E)-eicosatetraenoate + A + H2O. In terms of biological role, catalyzes the conversion of prostaglandin H2 (PGH2) to thromboxane A2 (TXA2), a potent inducer of blood vessel constriction and platelet aggregation. Also cleaves PGH2 to 12-hydroxy-heptadecatrienoicacid (12-HHT) and malondialdehyde, which is known to act as a mediator of DNA damage. 12-HHT and malondialdehyde are formed stoichiometrically in the same amounts as TXA2. Additionally, displays dehydratase activity, toward (15S)-hydroperoxy-(5Z,8Z,11Z,13E)-eicosatetraenoate (15(S)-HPETE) producing 15-KETE and 15-HETE. This Sus scrofa (Pig) protein is Thromboxane-A synthase (TBXAS1).